A 491-amino-acid polypeptide reads, in one-letter code: Acetyl-coenzyme A carboxylase carboxyl transferase subunit beta, chloroplastic (491 aa).

Residues 224–491 (LWIQCENCYG…FFPLNPKKIK (268 aa)) enclose the CoA carboxyltransferase N-terminal domain. Zn(2+) contacts are provided by Cys228, Cys231, Cys247, and Cys250. A C4-type zinc finger spans residues 228–250 (CENCYGLNYKKNLKSKINICEQC).

Belongs to the AccD/PCCB family. As to quaternary structure, acetyl-CoA carboxylase is a heterohexamer composed of biotin carboxyl carrier protein, biotin carboxylase and 2 subunits each of ACCase subunit alpha and ACCase plastid-coded subunit beta (accD). Zn(2+) is required as a cofactor.

It localises to the plastid. The protein localises to the chloroplast stroma. The enzyme catalyses N(6)-carboxybiotinyl-L-lysyl-[protein] + acetyl-CoA = N(6)-biotinyl-L-lysyl-[protein] + malonyl-CoA. The protein operates within lipid metabolism; malonyl-CoA biosynthesis; malonyl-CoA from acetyl-CoA: step 1/1. In terms of biological role, component of the acetyl coenzyme A carboxylase (ACC) complex. Biotin carboxylase (BC) catalyzes the carboxylation of biotin on its carrier protein (BCCP) and then the CO(2) group is transferred by the transcarboxylase to acetyl-CoA to form malonyl-CoA. This chain is Acetyl-coenzyme A carboxylase carboxyl transferase subunit beta, chloroplastic, found in Vitis vinifera (Grape).